We begin with the raw amino-acid sequence, 375 residues long: MPKKDFYEVLGVEKGANDAEIKKAFRKLALKYHPDKNAGNKEAEERFKEINEAYQVLSDPQKRAQYDQFGTADFNGGGAGFSGFEDFDLGDIFESFFGGGFGGFGGSSRRRNGPQKGPDVQYSINLTFNEAVFGVEKEVSITKSETCETCTGTGAKPGTNSKTCPKCNGSGQIKVQRNTALGSFVSVNTCDMCGGKGTIISDPCSDCKGKGTVRKQKKIKVNIPAGVDTGNVIPIRGQGEAGVNGGPPGDLYISVRVMPDPFFKRRGDDIYIDQHISFAKASLGTELKVKTIDGEVKYDIPSGTQPGTVFRLKGKGVPHVNGRGRGDQYVNIIVDIPKSLNQKQKEALFAYMEASGEIQSSEKEGFFDKIKKNFK.

In terms of domain architecture, J spans 5–70; it reads DFYEVLGVEK…QKRAQYDQFG (66 aa). The CR-type zinc finger occupies 134-216; the sequence is GVEKEVSITK…CKGKGTVRKQ (83 aa). 8 residues coordinate Zn(2+): Cys-147, Cys-150, Cys-164, Cys-167, Cys-190, Cys-193, Cys-204, and Cys-207. CXXCXGXG motif repeat units lie at residues 147–154, 164–171, 190–197, and 204–211; these read CETCTGTG, CPKCNGSG, CDMCGGKG, and CSDCKGKG.

Belongs to the DnaJ family. As to quaternary structure, homodimer. Zn(2+) is required as a cofactor.

The protein localises to the cytoplasm. Functionally, participates actively in the response to hyperosmotic and heat shock by preventing the aggregation of stress-denatured proteins and by disaggregating proteins, also in an autonomous, DnaK-independent fashion. Unfolded proteins bind initially to DnaJ; upon interaction with the DnaJ-bound protein, DnaK hydrolyzes its bound ATP, resulting in the formation of a stable complex. GrpE releases ADP from DnaK; ATP binding to DnaK triggers the release of the substrate protein, thus completing the reaction cycle. Several rounds of ATP-dependent interactions between DnaJ, DnaK and GrpE are required for fully efficient folding. Also involved, together with DnaK and GrpE, in the DNA replication of plasmids through activation of initiation proteins. The protein is Chaperone protein DnaJ of Clostridium tetani (strain Massachusetts / E88).